Here is a 92-residue protein sequence, read N- to C-terminus: Regakine-1 (92 aa).

The N-terminal stretch at 1–21 (MRVSLAALAFLLTLAVLHSEA) is a signal peptide. Intrachain disulfides connect cysteine 32-cysteine 56 and cysteine 33-cysteine 72.

The protein belongs to the intercrine beta (chemokine CC) family. As to expression, plasma serum.

Its subcellular location is the secreted. Its function is as follows. Chemotactic activity for neutrophils and lymphocytes. Binds to heparin. The polypeptide is Regakine-1 (Bos taurus (Bovine)).